Consider the following 757-residue polypeptide: Endonuclease MutS2 (757 aa).

An ATP-binding site is contributed by 321 to 328; the sequence is GPNMGGKT. The Smr domain maps to 681 to 756; that stretch reads IDIRGMTVEE…GTGVTVVEVK (76 aa).

The protein belongs to the DNA mismatch repair MutS family. MutS2 subfamily. As to quaternary structure, homodimer. Binds to stalled ribosomes, contacting rRNA.

Endonuclease that is involved in the suppression of homologous recombination and thus may have a key role in the control of bacterial genetic diversity. Its function is as follows. Acts as a ribosome collision sensor, splitting the ribosome into its 2 subunits. Detects stalled/collided 70S ribosomes which it binds and splits by an ATP-hydrolysis driven conformational change. Acts upstream of the ribosome quality control system (RQC), a ribosome-associated complex that mediates the extraction of incompletely synthesized nascent chains from stalled ribosomes and their subsequent degradation. Probably generates substrates for RQC. The protein is Endonuclease MutS2 of Thermotoga sp. (strain RQ2).